Here is a 726-residue protein sequence, read N- to C-terminus: Catalase-peroxidase (726 aa).

Residues 98–226 (WHSAGTYRMQ…LAAVHMGLIY (129 aa)) constitute a cross-link (tryptophyl-tyrosyl-methioninium (Trp-Tyr) (with M-252)). The Proton acceptor role is filled by histidine 99. A cross-link (tryptophyl-tyrosyl-methioninium (Tyr-Met) (with W-98)) is located at residues 226 to 252 (YVNPEGVNGQPDPARTAQHVRETFARM). Histidine 267 contacts heme b.

It belongs to the peroxidase family. Peroxidase/catalase subfamily. In terms of assembly, homodimer or homotetramer. Heme b serves as cofactor. Post-translationally, formation of the three residue Trp-Tyr-Met cross-link is important for the catalase, but not the peroxidase activity of the enzyme.

The enzyme catalyses H2O2 + AH2 = A + 2 H2O. It carries out the reaction 2 H2O2 = O2 + 2 H2O. In terms of biological role, bifunctional enzyme with both catalase and broad-spectrum peroxidase activity. In Roseobacter denitrificans (strain ATCC 33942 / OCh 114) (Erythrobacter sp. (strain OCh 114)), this protein is Catalase-peroxidase.